Consider the following 201-residue polypeptide: Probable quinol oxidase subunit 3 (201 aa).

Transmembrane regions (helical) follow at residues 20-40 (LGFWVFLTAEFSLFGTLFATL), 62-82 (LVLIMTFALLISSYTCGIAIY), 91-111 (LMLIWMIITVLLGMVFVGFEI), 133-153 (FFILLGTHGAHVSLGIVWIIC), and 180-200 (FLDVVWIFIFTAVYMIGMVFS).

Belongs to the cytochrome c oxidase subunit 3 family.

Its subcellular location is the cell membrane. It catalyses the reaction 2 a quinol + O2 = 2 a quinone + 2 H2O. Catalyzes quinol oxidation with the concomitant reduction of oxygen to water. In Staphylococcus saprophyticus subsp. saprophyticus (strain ATCC 15305 / DSM 20229 / NCIMB 8711 / NCTC 7292 / S-41), this protein is Probable quinol oxidase subunit 3 (qoxC).